The sequence spans 469 residues: ATP synthase subunit beta (469 aa).

Residue 155-162 (GGAGVGKT) coordinates ATP.

This sequence belongs to the ATPase alpha/beta chains family. As to quaternary structure, F-type ATPases have 2 components, CF(1) - the catalytic core - and CF(0) - the membrane proton channel. CF(1) has five subunits: alpha(3), beta(3), gamma(1), delta(1), epsilon(1). CF(0) has three main subunits: a(1), b(2) and c(9-12). The alpha and beta chains form an alternating ring which encloses part of the gamma chain. CF(1) is attached to CF(0) by a central stalk formed by the gamma and epsilon chains, while a peripheral stalk is formed by the delta and b chains.

The protein localises to the cell inner membrane. The catalysed reaction is ATP + H2O + 4 H(+)(in) = ADP + phosphate + 5 H(+)(out). Produces ATP from ADP in the presence of a proton gradient across the membrane. The catalytic sites are hosted primarily by the beta subunits. This is ATP synthase subunit beta from Helicobacter pylori (strain ATCC 700392 / 26695) (Campylobacter pylori).